A 431-amino-acid polypeptide reads, in one-letter code: Glutamate--tRNA ligase 1 (431 aa).

The short motif at 6 to 16 (PSPTGDMHIGN) is the 'HIGH' region element. The 'KMSKS' region signature appears at 235–239 (KMSKR). Lys238 is an ATP binding site.

Belongs to the class-I aminoacyl-tRNA synthetase family. Glutamate--tRNA ligase type 1 subfamily. As to quaternary structure, monomer.

It is found in the cytoplasm. The enzyme catalyses tRNA(Glu) + L-glutamate + ATP = L-glutamyl-tRNA(Glu) + AMP + diphosphate. Functionally, catalyzes the attachment of glutamate to tRNA(Glu) in a two-step reaction: glutamate is first activated by ATP to form Glu-AMP and then transferred to the acceptor end of tRNA(Glu). This chain is Glutamate--tRNA ligase 1, found in Campylobacter jejuni subsp. jejuni serotype O:23/36 (strain 81-176).